The chain runs to 482 residues: Transcription termination/antitermination protein NusA (482 aa).

Positions 133–197 (NKVVIGYVQQ…NGIEVILSRT (65 aa)) constitute an S1 motif domain. The KH domain maps to 300 to 446 (LHKALVVVSD…NDNDESMEKV (147 aa)).

Belongs to the NusA family. As to quaternary structure, monomer. Binds directly to the core enzyme of the DNA-dependent RNA polymerase and to nascent RNA.

It localises to the cytoplasm. In terms of biological role, participates in both transcription termination and antitermination. The polypeptide is Transcription termination/antitermination protein NusA (Borreliella burgdorferi (strain ATCC 35210 / DSM 4680 / CIP 102532 / B31) (Borrelia burgdorferi)).